The primary structure comprises 132 residues: MASRTSRTSGHKRRAKKNIEKGVAHIHSTFNNTIVLITDEAGNAVSWSSAGSLGFKGSRKSTPFAAQLAGEAAAKAAMEQNMHSVAISVKGPGPGRESAIRAVAAAGLEITAISDVTPVPHNGSRPPKQRRA.

Belongs to the universal ribosomal protein uS11 family. Part of the 30S ribosomal subunit. Interacts with proteins S7 and S18. Binds to IF-3.

Its function is as follows. Located on the platform of the 30S subunit, it bridges several disparate RNA helices of the 16S rRNA. Forms part of the Shine-Dalgarno cleft in the 70S ribosome. The sequence is that of Small ribosomal subunit protein uS11 from Oenococcus oeni (strain ATCC BAA-331 / PSU-1).